A 300-amino-acid chain; its full sequence is 2-keto-3-deoxy-L-fuconate dehydrogenase (300 aa).

NAD(+) contacts are provided by residues 63–90 (LITA…IATD) and aspartate 112. Arginine 198 contributes to the substrate binding site. Tyrosine 201 serves as the catalytic Proton acceptor. Residues lysine 205 and 234–238 (IKTPS) each bind NAD(+). The substrate site is built by arginine 242 and arginine 260.

This sequence belongs to the short-chain dehydrogenases/reductases (SDR) family.

In terms of biological role, plays a role in the catabolism of L-fucose. Catalyzes the NAD(+)-dependent oxidation of 2-keo-3-deoxy-L-fuconate to 2,4-diketo-3-deoxy-L-fuconate. This is 2-keto-3-deoxy-L-fuconate dehydrogenase from Xanthomonas campestris pv. campestris (strain ATCC 33913 / DSM 3586 / NCPPB 528 / LMG 568 / P 25).